A 445-amino-acid chain; its full sequence is Proline--tRNA ligase (445 aa).

Belongs to the class-II aminoacyl-tRNA synthetase family. ProS type 2 subfamily. As to quaternary structure, homodimer.

It localises to the cytoplasm. The catalysed reaction is tRNA(Pro) + L-proline + ATP = L-prolyl-tRNA(Pro) + AMP + diphosphate. Catalyzes the attachment of proline to tRNA(Pro) in a two-step reaction: proline is first activated by ATP to form Pro-AMP and then transferred to the acceptor end of tRNA(Pro). The sequence is that of Proline--tRNA ligase from Cereibacter sphaeroides (strain ATCC 17023 / DSM 158 / JCM 6121 / CCUG 31486 / LMG 2827 / NBRC 12203 / NCIMB 8253 / ATH 2.4.1.) (Rhodobacter sphaeroides).